The following is a 573-amino-acid chain: Glutamate--tRNA ligase (573 aa).

The 'HIGH' region signature appears at 107–117 (PNPDGAFHLGN).

Belongs to the class-I aminoacyl-tRNA synthetase family. Glutamate--tRNA ligase type 2 subfamily.

It localises to the cytoplasm. The catalysed reaction is tRNA(Glu) + L-glutamate + ATP = L-glutamyl-tRNA(Glu) + AMP + diphosphate. Catalyzes the attachment of glutamate to tRNA(Glu) in a two-step reaction: glutamate is first activated by ATP to form Glu-AMP and then transferred to the acceptor end of tRNA(Glu). This is Glutamate--tRNA ligase from Thermococcus kodakarensis (strain ATCC BAA-918 / JCM 12380 / KOD1) (Pyrococcus kodakaraensis (strain KOD1)).